The following is a 362-amino-acid chain: MTPAGKRILVMAGGTGGHVFPALAVAKYLAQQGWQVRWLGTADRMEARLVPQYGFDIDFIDIKGVRGNGLIRKLAAPFKVVRSILQAKAVIAEFKPDVVLGMGGFASGPGGVAARLAGIPLVLHEQNAIPGMTNKLLSRIATQVLCAFKNTFTTVKAKVVGNPIRQELIALGAQPKPEADKALKVLVVGGSLGAKVFNDLMPEAVAILSQQQSVTVWHQVGKDNLAGVKAAYQQHGQDGGVNIAEFIDDMEAAYRWADVVLCRAGALTVSELAAVGLPSILVPYPHAVDDHQTRNGQVLVEAGAAFLLPQAILDVNKLAGKLQLLANDRTELARMGQRARDVAVLDATEQVAAVCISLAEKG.

UDP-N-acetyl-alpha-D-glucosamine-binding positions include 15–17 (TGG), Asn-127, Arg-165, Ser-191, Ile-247, 266–271 (ALTVSE), and Gln-292.

The protein belongs to the glycosyltransferase 28 family. MurG subfamily.

Its subcellular location is the cell inner membrane. The catalysed reaction is di-trans,octa-cis-undecaprenyl diphospho-N-acetyl-alpha-D-muramoyl-L-alanyl-D-glutamyl-meso-2,6-diaminopimeloyl-D-alanyl-D-alanine + UDP-N-acetyl-alpha-D-glucosamine = di-trans,octa-cis-undecaprenyl diphospho-[N-acetyl-alpha-D-glucosaminyl-(1-&gt;4)]-N-acetyl-alpha-D-muramoyl-L-alanyl-D-glutamyl-meso-2,6-diaminopimeloyl-D-alanyl-D-alanine + UDP + H(+). It participates in cell wall biogenesis; peptidoglycan biosynthesis. Its function is as follows. Cell wall formation. Catalyzes the transfer of a GlcNAc subunit on undecaprenyl-pyrophosphoryl-MurNAc-pentapeptide (lipid intermediate I) to form undecaprenyl-pyrophosphoryl-MurNAc-(pentapeptide)GlcNAc (lipid intermediate II). This Shewanella baltica (strain OS185) protein is UDP-N-acetylglucosamine--N-acetylmuramyl-(pentapeptide) pyrophosphoryl-undecaprenol N-acetylglucosamine transferase.